Here is a 154-residue protein sequence, read N- to C-terminus: Aspartate carbamoyltransferase regulatory chain (154 aa).

Zn(2+) contacts are provided by Cys109, Cys114, Cys138, and Cys141.

This sequence belongs to the PyrI family. As to quaternary structure, contains catalytic and regulatory chains. It depends on Zn(2+) as a cofactor.

Involved in allosteric regulation of aspartate carbamoyltransferase. In Photorhabdus laumondii subsp. laumondii (strain DSM 15139 / CIP 105565 / TT01) (Photorhabdus luminescens subsp. laumondii), this protein is Aspartate carbamoyltransferase regulatory chain.